Consider the following 274-residue polypeptide: Undecaprenyl-diphosphatase (274 aa).

7 consecutive transmembrane segments (helical) span residues 40–60, 90–110, 114–134, 147–167, 190–210, 221–241, and 252–272; these read PGAA…LMFF, WFII…KDVI, FRSL…LGVA, ISLR…IPGV, YAFL…LKDI, PTIV…AWLL, and FVLY…TGVI.

This sequence belongs to the UppP family.

It is found in the cell membrane. The catalysed reaction is di-trans,octa-cis-undecaprenyl diphosphate + H2O = di-trans,octa-cis-undecaprenyl phosphate + phosphate + H(+). Its function is as follows. Catalyzes the dephosphorylation of undecaprenyl diphosphate (UPP). Confers resistance to bacitracin. This Nocardioides sp. (strain ATCC BAA-499 / JS614) protein is Undecaprenyl-diphosphatase.